The following is a 786-amino-acid chain: Endonuclease MutS2 (786 aa).

Residue 332-339 (GPNTGGKT) coordinates ATP. In terms of domain architecture, Smr spans 710-785 (VDLRGLDAEE…GDGVTMVELK (76 aa)).

This sequence belongs to the DNA mismatch repair MutS family. MutS2 subfamily. As to quaternary structure, homodimer. Binds to stalled ribosomes, contacting rRNA.

Functionally, endonuclease that is involved in the suppression of homologous recombination and thus may have a key role in the control of bacterial genetic diversity. Acts as a ribosome collision sensor, splitting the ribosome into its 2 subunits. Detects stalled/collided 70S ribosomes which it binds and splits by an ATP-hydrolysis driven conformational change. Acts upstream of the ribosome quality control system (RQC), a ribosome-associated complex that mediates the extraction of incompletely synthesized nascent chains from stalled ribosomes and their subsequent degradation. Probably generates substrates for RQC. The sequence is that of Endonuclease MutS2 from Clostridium beijerinckii (strain ATCC 51743 / NCIMB 8052) (Clostridium acetobutylicum).